We begin with the raw amino-acid sequence, 562 residues long: Arginine--tRNA ligase (562 aa).

The 'HIGH' region signature appears at 129–139 (ANPTGPLHVGH).

It belongs to the class-I aminoacyl-tRNA synthetase family. As to quaternary structure, monomer.

It localises to the cytoplasm. It carries out the reaction tRNA(Arg) + L-arginine + ATP = L-arginyl-tRNA(Arg) + AMP + diphosphate. The chain is Arginine--tRNA ligase from Stenotrophomonas maltophilia (strain K279a).